The chain runs to 163 residues: Choriogonadotropin subunit beta variant 2 (163 aa).

A signal peptide spans 1 to 18 (MSKGLLLLLLLSMGGTWA). Disulfide bonds link Cys27-Cys75, Cys41-Cys90, Cys44-Cys128, Cys52-Cys106, Cys56-Cys108, and Cys111-Cys118. N-linked (GlcNAc...) asparagine glycans are attached at residues Asn31 and Asn48. A disordered region spans residues 129 to 163 (DDPRFQASSSSKAPPPSLPSPSRLPGPSDTPILPQ). Over residues 141 to 152 (APPPSLPSPSRL) the composition is skewed to pro residues.

This sequence belongs to the glycoprotein hormones subunit beta family. Expressed in placenta, testis and pituitary.

Its subcellular location is the secreted. This is Choriogonadotropin subunit beta variant 2 (CGB2) from Homo sapiens (Human).